A 143-amino-acid chain; its full sequence is Large ribosomal subunit protein uL15 (143 aa).

Basic residues-rich tracts occupy residues 1–14 and 23–38; these read MIRKSKKITKKRGS and KKHRGAGHRGGRGNAG. A disordered region spans residues 1–38; the sequence is MIRKSKKITKKRGSRTCGYGEAKKHRGAGHRGGRGNAG.

It belongs to the universal ribosomal protein uL15 family. In terms of assembly, part of the 50S ribosomal subunit.

In terms of biological role, binds to the 23S rRNA. This Methanococcus maripaludis (strain DSM 14266 / JCM 13030 / NBRC 101832 / S2 / LL) protein is Large ribosomal subunit protein uL15.